We begin with the raw amino-acid sequence, 77 residues long: Sec-independent protein translocase protein TatA 2 (77 aa).

The helical transmembrane segment at 2-22 (FPGGISMTELIIILAVILLLF) threads the bilayer. The tract at residues 52–77 (KEVKAEDVKTEERKEEKKEEKEKVEA) is disordered.

It belongs to the TatA/E family. As to quaternary structure, forms a complex with TatC.

The protein resides in the cell inner membrane. In terms of biological role, part of the twin-arginine translocation (Tat) system that transports large folded proteins containing a characteristic twin-arginine motif in their signal peptide across membranes. TatA could form the protein-conducting channel of the Tat system. This chain is Sec-independent protein translocase protein TatA 2, found in Aquifex aeolicus (strain VF5).